The following is a 177-amino-acid chain: Large ribosomal subunit protein uL6 (177 aa).

This sequence belongs to the universal ribosomal protein uL6 family. As to quaternary structure, part of the 50S ribosomal subunit.

Its function is as follows. This protein binds to the 23S rRNA, and is important in its secondary structure. It is located near the subunit interface in the base of the L7/L12 stalk, and near the tRNA binding site of the peptidyltransferase center. In Leptothrix cholodnii (strain ATCC 51168 / LMG 8142 / SP-6) (Leptothrix discophora (strain SP-6)), this protein is Large ribosomal subunit protein uL6.